A 340-amino-acid chain; its full sequence is Phospho-N-acetylmuramoyl-pentapeptide-transferase (340 aa).

Helical transmembrane passes span 22–42 (VVVPFGLSALGSALLGSLLIP), 69–89 (TMGGISFLPVGLLVAGIWSGW), 95–115 (AVALLTLAYSFVGWLDDWLVI), 129–149 (LLLQVGVALGFCVYLAWQGIP), 156–176 (GIGTLSLGWLFWPLALFVLVG), 186–206 (GMDGLAAGVVAILLIGLGLLH), 209–229 (PELSVLAFTLSGACLGFLVHN), 235–257 (LFMGDTGSLGLGGALAGLALLGD), and 316–336 (VVGSFYGVTALLVGLGWAWWH).

It belongs to the glycosyltransferase 4 family. MraY subfamily. Mg(2+) serves as cofactor.

Its subcellular location is the cell inner membrane. It carries out the reaction UDP-N-acetyl-alpha-D-muramoyl-L-alanyl-gamma-D-glutamyl-meso-2,6-diaminopimeloyl-D-alanyl-D-alanine + di-trans,octa-cis-undecaprenyl phosphate = di-trans,octa-cis-undecaprenyl diphospho-N-acetyl-alpha-D-muramoyl-L-alanyl-D-glutamyl-meso-2,6-diaminopimeloyl-D-alanyl-D-alanine + UMP. It participates in cell wall biogenesis; peptidoglycan biosynthesis. Functionally, catalyzes the initial step of the lipid cycle reactions in the biosynthesis of the cell wall peptidoglycan: transfers peptidoglycan precursor phospho-MurNAc-pentapeptide from UDP-MurNAc-pentapeptide onto the lipid carrier undecaprenyl phosphate, yielding undecaprenyl-pyrophosphoryl-MurNAc-pentapeptide, known as lipid I. The sequence is that of Phospho-N-acetylmuramoyl-pentapeptide-transferase from Synechococcus sp. (strain JA-2-3B'a(2-13)) (Cyanobacteria bacterium Yellowstone B-Prime).